A 264-amino-acid chain; its full sequence is Undecaprenyl-diphosphatase (264 aa).

Transmembrane regions (helical) follow at residues 41 to 61, 82 to 102, 106 to 126, 140 to 160, 213 to 233, and 244 to 264; these read NLAFTIVVHVATVCSTLVILW, YVINIVISMIPIGIVGVFFKD, AIFGSGLMIVGCMLLLTAALL, ISMKDAFIIGLAQACAVLPGL, IPALSLIVGFLAAFVAGCLAC, and KLIYFAIYCAIAGLAVIITQL.

The protein belongs to the UppP family.

It is found in the cell inner membrane. It carries out the reaction di-trans,octa-cis-undecaprenyl diphosphate + H2O = di-trans,octa-cis-undecaprenyl phosphate + phosphate + H(+). Its function is as follows. Catalyzes the dephosphorylation of undecaprenyl diphosphate (UPP). Confers resistance to bacitracin. In Bacteroides thetaiotaomicron (strain ATCC 29148 / DSM 2079 / JCM 5827 / CCUG 10774 / NCTC 10582 / VPI-5482 / E50), this protein is Undecaprenyl-diphosphatase.